We begin with the raw amino-acid sequence, 266 residues long: Hydroxyethylthiazole kinase (266 aa).

Met46 provides a ligand contact to substrate. Arg122 and Ser168 together coordinate ATP. Gly195 serves as a coordination point for substrate.

This sequence belongs to the Thz kinase family. It depends on Mg(2+) as a cofactor.

The enzyme catalyses 5-(2-hydroxyethyl)-4-methylthiazole + ATP = 4-methyl-5-(2-phosphooxyethyl)-thiazole + ADP + H(+). The protein operates within cofactor biosynthesis; thiamine diphosphate biosynthesis; 4-methyl-5-(2-phosphoethyl)-thiazole from 5-(2-hydroxyethyl)-4-methylthiazole: step 1/1. Its function is as follows. Catalyzes the phosphorylation of the hydroxyl group of 4-methyl-5-beta-hydroxyethylthiazole (THZ). The polypeptide is Hydroxyethylthiazole kinase (Oleidesulfovibrio alaskensis (strain ATCC BAA-1058 / DSM 17464 / G20) (Desulfovibrio alaskensis)).